Here is a 248-residue protein sequence, read N- to C-terminus: Kallikrein-12 (248 aa).

The first 17 residues, 1–17 (MGLSIFLLLCVLGLSQA), serve as a signal peptide directing secretion. Residues 22-246 (IFNGTECGRN…YVDWIRMIMR (225 aa)) form the Peptidase S1 domain. Asn-24 carries an N-linked (GlcNAc...) asparagine glycan. 6 disulfides stabilise this stretch: Cys-28–Cys-161, Cys-47–Cys-63, Cys-133–Cys-235, Cys-140–Cys-206, Cys-172–Cys-186, and Cys-196–Cys-222. Active-site charge relay system residues include His-62 and Asp-108. The N-linked (GlcNAc...) asparagine glycan is linked to Asn-163. The Charge relay system role is filled by Ser-200.

It belongs to the peptidase S1 family. Kallikrein subfamily.

The protein resides in the secreted. The polypeptide is Kallikrein-12 (KLK12) (Homo sapiens (Human)).